The sequence spans 1890 residues: DNA polymerase zeta catalytic subunit (1890 aa).

2 stretches are compositionally biased toward polar residues: residues 508–533 and 549–560; these read QENL…NLRT and PDSSTSNGASEN. 2 disordered regions span residues 508–565 and 922–942; these read QENL…FRRY and GDSN…DRGA. Positions 922 to 940 are enriched in basic and acidic residues; that stretch reads GDSNIDSEKQPLRDNHNDR. The Zn(2+) site is built by Cys-1789, Cys-1792, Cys-1803, and Cys-1806. The CysA-type zinc finger occupies 1789–1806; sequence CILCGEVVQESAQLCNRC. Residues Cys-1835, Cys-1838, Cys-1851, and Cys-1856 each coordinate [4Fe-4S] cluster. The CysB motif motif lies at 1835–1856; the sequence is CRHCGGGDWVVQSGVKCNSLAC.

The protein belongs to the DNA polymerase type-B family. As to quaternary structure, forms DNA polymerase zeta with REV7. Requires [4Fe-4S] cluster as cofactor. Expressed in roots, leaves and flowers.

The protein localises to the nucleus. The catalysed reaction is DNA(n) + a 2'-deoxyribonucleoside 5'-triphosphate = DNA(n+1) + diphosphate. Functionally, catalytic subunit of the error prone DNA polymerase zeta. Involved in damage-tolerance mechanisms through translesion DNA synthesis. In Arabidopsis thaliana (Mouse-ear cress), this protein is DNA polymerase zeta catalytic subunit (REV3).